The following is a 103-amino-acid chain: Putative membrane protein insertion efficiency factor (103 aa).

The protein belongs to the UPF0161 family.

Its subcellular location is the cell inner membrane. Functionally, could be involved in insertion of integral membrane proteins into the membrane. The chain is Putative membrane protein insertion efficiency factor from Chlamydia abortus (strain DSM 27085 / S26/3) (Chlamydophila abortus).